We begin with the raw amino-acid sequence, 213 residues long: Thymidylate kinase (213 aa).

10–17 contacts ATP; that stretch reads GLEGAGKT.

The protein belongs to the thymidylate kinase family.

The catalysed reaction is dTMP + ATP = dTDP + ADP. Functionally, phosphorylation of dTMP to form dTDP in both de novo and salvage pathways of dTTP synthesis. The chain is Thymidylate kinase from Escherichia coli O7:K1 (strain IAI39 / ExPEC).